The following is a 466-amino-acid chain: 3-isopropylmalate dehydratase large subunit (466 aa).

The [4Fe-4S] cluster site is built by cysteine 347, cysteine 407, and cysteine 410.

This sequence belongs to the aconitase/IPM isomerase family. LeuC type 1 subfamily. Heterodimer of LeuC and LeuD. The cofactor is [4Fe-4S] cluster.

The catalysed reaction is (2R,3S)-3-isopropylmalate = (2S)-2-isopropylmalate. The protein operates within amino-acid biosynthesis; L-leucine biosynthesis; L-leucine from 3-methyl-2-oxobutanoate: step 2/4. Catalyzes the isomerization between 2-isopropylmalate and 3-isopropylmalate, via the formation of 2-isopropylmaleate. The sequence is that of 3-isopropylmalate dehydratase large subunit from Blochmanniella pennsylvanica (strain BPEN).